Here is a 473-residue protein sequence, read N- to C-terminus: Glucose facilitated diffusion protein (473 aa).

Residues 1-13 (MSSESSQGLVTRL) are Cytoplasmic-facing. Residues 14–34 (ALIAAIGGLLFGYDSAVIAAI) traverse the membrane as a helical segment. Over 35-59 (GTPVDIHFIAPRHLSATAAASLSGM) the chain is Periplasmic. The chain crosses the membrane as a helical span at residues 60-80 (VVVAVLVGCVTGSLLSGWIGI). The Cytoplasmic segment spans residues 81–85 (RFGRR). The chain crosses the membrane as a helical span at residues 86–106 (GGLLMSSICFVAAGFGAALTE). Over 107–112 (KLFGTG) the chain is Periplasmic. A helical transmembrane segment spans residues 113-133 (GSALQIFCFFRFLAGLGIGVV). Topologically, residues 134 to 158 (STLTPTYIAEIAPPDKRGQMVSGQQ) are cytoplasmic. Residues 159–179 (MAIVTGALTGYIFTWLLAHFG) traverse the membrane as a helical segment. Over 180–187 (SIDWVNAS) the chain is Periplasmic. The chain crosses the membrane as a helical span at residues 188–208 (GWCWSPASEGLIGIAFLLLLL). Residues 209–257 (TAPDTPHWLVMKGRHSEASKILARLEPQADPNLTIQKIKAGFDKAMDKS) are Cytoplasmic-facing. The helical transmembrane segment at 258–278 (SAGLFAFGITVVFAGVSVAAF) threads the bilayer. Residues 279–303 (QQLVGINAVLYYAPQMFQNLGFGAD) lie on the Periplasmic side of the membrane. A helical transmembrane segment spans residues 304-324 (TALLQTISIGVVNFIFTMIAS). Residues 325 to 335 (RVVDRFGRKPL) lie on the Cytoplasmic side of the membrane. A helical membrane pass occupies residues 336-356 (LIWGALGMAAMMAVLGCCFWF). Topologically, residues 357 to 366 (KVGGVLPLAS) are periplasmic. Residues 367–387 (VLLYIAVFGMSWGPVCWVVLS) form a helical membrane-spanning segment. Over 388–396 (EMFPSSIKG) the chain is Cytoplasmic. A helical transmembrane segment spans residues 397 to 417 (AAMPIAVTGQWLANILVNFLF). Topologically, residues 418 to 429 (KVADGSPALNQT) are periplasmic. A helical transmembrane segment spans residues 430–450 (FNHGFSYLVFAALSILGGLIV). Over 451-473 (ARFVPETKGRSLDEIEEMWRSQK) the chain is Cytoplasmic.

This sequence belongs to the major facilitator superfamily. Sugar transporter (TC 2.A.1.1) family.

The protein resides in the cell inner membrane. Functionally, allows uptake of glucose by the cell; allows growth on glucose minimal medium by E.coli cells impaired in glucose transport. Also transports fructose, but has a strong preference for glucose. This is Glucose facilitated diffusion protein from Zymomonas mobilis subsp. mobilis (strain ATCC 31821 / ZM4 / CP4).